The following is a 608-amino-acid chain: FAD-binding monooxygenase ktnD (608 aa).

Asparagine 4 is a glycosylation site (N-linked (GlcNAc...) asparagine). The helical transmembrane segment at 17 to 37 (ATVVIIGAGVSGMCMAIDLLH) threads the bilayer. FAD-binding positions include 56–59 (TWAN), 68–69 (DV), and tyrosine 74. 66–68 (ASD) provides a ligand contact to NADP(+). The N-linked (GlcNAc...) asparagine glycan is linked to asparagine 114. Residues 201–207 (NGASAIQ) and 224–225 (RS) contribute to the NADP(+) site. The N-linked (GlcNAc...) asparagine glycan is linked to asparagine 325. A helical membrane pass occupies residues 535-555 (ALVSNVTLFLGVALAAGGVYW).

Belongs to the FAD-binding monooxygenase family. It depends on FAD as a cofactor.

The protein resides in the membrane. Functionally, non-reducing polyketide synthase; part of the gene cluster that mediates the biosynthesis of the bicoumarin kotanin. The non-reducing polyketide synthase ktnS first catalyzes the formation of the pentaketidic 4,7-dihydroxy-5-methylcoumarin from acetyl coenzyme A and 4 malonyl coenzyme A molecules. Further O-methylation by ktnB leads to the formation of 7-demethylsiderin. Then, an oxidative phenol coupling catalyzed by the cytochrome P450 monooxygenase ktnC forms the 8,8'-dimer P-orlandin via dimerization the monomeric precursor, 7-demethylsiderin. P-orlandin is subsequently O-methylated in a stepwise fashion to demethylkotanin and kotanin. The function of ktnD within the pathway has not been determined yet. This chain is FAD-binding monooxygenase ktnD, found in Aspergillus niger (strain ATCC MYA-4892 / CBS 513.88 / FGSC A1513).